A 433-amino-acid chain; its full sequence is MSIITDIYAREVLDSRGNPTLEVEVYTEDGAFGRGMVPSGASTGEHEAVELRDGDKSRYNGLGTQKAVDNVNNIIAEAIIGYEVTDQQAIDRAMIALDGTENKGKLGANAILGVSIAAARAAADELGVPLYNYLGGFNAKVLPTPMMNIINGGSHSDAPIAFQEFMIVPVGAPTFKEALRWGAEIFHALKKILKARGLETAVGDEGGFAPKFDGTEDGVETILKAIEAAGYKAGEDGVMIGFDCASSEFYENGVYDYTKFEGEGGKKLSASEQVDYLEELVSKYPIITIEDGMDENDWDGWKILTERLGKKVQLVGDDFFVTNTKYLERGIRENASNAILIKVNQIGTLTETFEAIEMAKEAGFTAIVSHRSGETEDSTISDIAVATNAGQIKTGSLSRTDRMAKYNQLLRIEDQLAEVAQYKGLKAFYNLKK.

A disordered region spans residues 34-56 (RGMVPSGASTGEHEAVELRDGDK). The segment covering 44-56 (GEHEAVELRDGDK) has biased composition (basic and acidic residues). Glutamine 163 is a (2R)-2-phosphoglycerate binding site. Glutamate 205 acts as the Proton donor in catalysis. Residues aspartate 243, glutamate 290, and aspartate 317 each contribute to the Mg(2+) site. (2R)-2-phosphoglycerate contacts are provided by lysine 342, arginine 371, serine 372, and lysine 393. The active-site Proton acceptor is the lysine 342.

This sequence belongs to the enolase family. Mg(2+) serves as cofactor.

The protein localises to the cytoplasm. The protein resides in the secreted. Its subcellular location is the cell surface. The catalysed reaction is (2R)-2-phosphoglycerate = phosphoenolpyruvate + H2O. The protein operates within carbohydrate degradation; glycolysis; pyruvate from D-glyceraldehyde 3-phosphate: step 4/5. Its function is as follows. Catalyzes the reversible conversion of 2-phosphoglycerate (2-PG) into phosphoenolpyruvate (PEP). It is essential for the degradation of carbohydrates via glycolysis. In Lactococcus lactis subsp. cremoris (strain SK11), this protein is Enolase 2.